Reading from the N-terminus, the 315-residue chain is Tetratricopeptide repeat protein 23-like (315 aa).

The segment at 28–56 (KIPEHQRTDESSPTSGSEESEEDTKAKEK) is disordered. Coiled coils occupy residues 65–90 (REKLAQSQKKIAQLIKGKKNIEANKE), 179–200 (REAYFNLQKSERNMKELRESYK), and 250–280 (SELVSLYQEIAQIEQLRRNHEQAIQYLHQAH).

Its subcellular location is the cytoplasm. It localises to the cytoskeleton. It is found in the microtubule organizing center. The protein localises to the centrosome. The protein resides in the spindle. Its subcellular location is the midbody. In Bos taurus (Bovine), this protein is Tetratricopeptide repeat protein 23-like (TTC23L).